We begin with the raw amino-acid sequence, 338 residues long: Protein FosB (338 aa).

Disordered stretches follow at residues 1–54 and 80–179; these read MFQA…PGSF and AQSQ…RREL. Polar residues-rich tracts occupy residues 13–31 and 102–112; these read SRCSSSPSAESQYLSSVDS and TSYSTPGLSAY. At S27 the chain carries Phosphoserine. The segment covering 123 to 137 has biased composition (low complexity); sequence PSTSTTTSGPVSARP. The 64-residue stretch at 155–218 folds into the bZIP domain; the sequence is EEKRRVRRER…ERLEFVLVAH (64 aa). The basic motif stretch occupies residues 157–182; sequence KRRVRRERNKLAAAKCRNRRRELTDR. Residues 183–211 are leucine-zipper; sequence LQAETDQLEEEKAELESEIAELQKEKERL. 2 disordered regions span residues 222–276 and 316–338; these read CKIP…PPNL and GAQRTSGSEQPSDPLNSPSLLAL. The span at 256-265 shows a compositional bias: pro residues; the sequence is LPPPPPPPLP. Composition is skewed to polar residues over residues 266–276 and 318–338; these read FQSSRDAPPNL and QRTSGSEQPSDPLNSPSLLAL.

It belongs to the bZIP family. Fos subfamily. In terms of assembly, heterodimer; binds to DNA as heterodimer. Component of an AP-1 transcription factor complex; composed of FOS-JUN heterodimers. As part of the AP-1 transcription factor complex, forms heterodimers with JUN, JUNB or JUND, thereby binding to the AP-1 consensus sequence and stimulating transcription. Interacts with the BAF multiprotein chromatin-remodeling complex subunits SMARCB1 and SMARCD1. Interacts with ARID1A and JUN. Homodimer under oxidizing conditions and monomer under reducing conditions (in vitro). Heterodimer; binds to DNA as heterodimer. Forms heterodimers with JUNB, JUN or JUND; thereby binding to the AP-1 consensus sequence but does not stimulate transcription. Forms heterodimers with JUND under oxidizing conditions. Post-translationally, phosphorylated. Phosphorylated at Ser-27 by CSNK2A1; phosphorylation increases protein stability and transactivation potential. Expressed in brain, including the preoptic area of the hypothalamus, the main and accessory olfactory bulbs, the pyriform cortex and the hippocampus (at protein level). Expressed in the neurons of the subgranular zone of the dentate gyrus in the hippocampus (at protein level). Expressed in pyramidal cells in CA1 and CA3, in the dentate gyrus and the nucleus accumbens of the striatum (at protein level). In terms of tissue distribution, expressed in the core and shell of the nucleus accumbens of the striatum (at protein level). Expressed in the neurons of the subgranular zone of the dentate gyrus in the hippocampus (at protein level).

The protein localises to the nucleus. Functionally, heterodimerizes with proteins of the JUN family to form an AP-1 transcription factor complex, thereby enhancing their DNA binding activity to gene promoters containing an AP-1 consensus sequence 5'-TGA[GC]TCA-3' and enhancing their transcriptional activity. As part of the AP-1 complex, facilitates enhancer selection together with cell-type-specific transcription factors by collaboratively binding to nucleosomal enhancers and recruiting the SWI/SNF (BAF) chromatin remodeling complex to establish accessible chromatin. Together with JUN, plays a role in activation-induced cell death of T cells by binding to the AP-1 promoter site of FASLG/CD95L, and inducing its transcription in response to activation of the TCR/CD3 signaling pathway. Exhibits transactivation activity in vitro. Involved in the display of nurturing behavior towards newborns. May play a role in neurogenesis in the hippocampus and in learning and memory-related tasks by regulating the expression of various genes involved in neurogenesis, depression and epilepsy. Implicated in behavioral responses related to morphine reward and spatial memory. In terms of biological role, exhibits lower transactivation activity than isoform 1 in vitro. The heterodimer with JUN does not display any transcriptional activity, and may thereby act as an transcriptional inhibitor. May be involved in the regulation of neurogenesis in the hippocampus. May play a role in synaptic modifications in nucleus accumbens medium spiny neurons and thereby play a role in adaptive and pathological reward-dependent learning, including maladaptive responses involved in drug addiction. Seems to be more stably expressed with a half-life of ~9.5 hours in cell culture as compared to 1.5 hours half-life of isoform 1. The protein is Protein FosB of Mus musculus (Mouse).